Here is a 68-residue protein sequence, read N- to C-terminus: ATP synthase F(0) complex subunit 8 (68 aa).

A helical membrane pass occupies residues 8-24 (TWLITILSMILTLLIVF). K54 carries the post-translational modification N6-acetyllysine; alternate. Residue K54 is modified to N6-succinyllysine; alternate. K57 is modified (N6-acetyllysine).

This sequence belongs to the ATPase protein 8 family. As to quaternary structure, component of the ATP synthase complex composed at least of ATP5F1A/subunit alpha, ATP5F1B/subunit beta, ATP5MC1/subunit c (homooctomer), MT-ATP6/subunit a, MT-ATP8/subunit 8, ATP5ME/subunit e, ATP5MF/subunit f, ATP5MG/subunit g, ATP5MK/subunit k, ATP5MJ/subunit j, ATP5F1C/subunit gamma, ATP5F1D/subunit delta, ATP5F1E/subunit epsilon, ATP5PF/subunit F6, ATP5PB/subunit b, ATP5PD/subunit d, ATP5PO/subunit OSCP. ATP synthase complex consists of a soluble F(1) head domain (subunits alpha(3) and beta(3)) - the catalytic core - and a membrane F(0) domain - the membrane proton channel (subunits c, a, 8, e, f, g, k and j). These two domains are linked by a central stalk (subunits gamma, delta, and epsilon) rotating inside the F1 region and a stationary peripheral stalk (subunits F6, b, d, and OSCP). Interacts with PRICKLE3.

The protein resides in the mitochondrion membrane. Subunit 8, of the mitochondrial membrane ATP synthase complex (F(1)F(0) ATP synthase or Complex V) that produces ATP from ADP in the presence of a proton gradient across the membrane which is generated by electron transport complexes of the respiratory chain. ATP synthase complex consist of a soluble F(1) head domain - the catalytic core - and a membrane F(1) domain - the membrane proton channel. These two domains are linked by a central stalk rotating inside the F(1) region and a stationary peripheral stalk. During catalysis, ATP synthesis in the catalytic domain of F(1) is coupled via a rotary mechanism of the central stalk subunits to proton translocation. In vivo, can only synthesize ATP although its ATP hydrolase activity can be activated artificially in vitro. Part of the complex F(0) domain. The sequence is that of ATP synthase F(0) complex subunit 8 from Lemur catta (Ring-tailed lemur).